The following is a 508-amino-acid chain: Glycerol kinase (508 aa).

Residue Thr-14 coordinates ADP. ATP-binding residues include Thr-14, Thr-15, and Ser-16. Thr-14 is a binding site for sn-glycerol 3-phosphate. Arg-18 is a binding site for ADP. The sn-glycerol 3-phosphate site is built by Arg-84, Glu-85, Tyr-136, and Asp-245. Residues Arg-84, Glu-85, Tyr-136, Asp-245, and Gln-246 each contribute to the glycerol site. ADP contacts are provided by Thr-267 and Gly-314. The ATP site is built by Thr-267, Gly-314, Gln-318, and Gly-415. Positions 415 and 419 each coordinate ADP.

This sequence belongs to the FGGY kinase family.

The enzyme catalyses glycerol + ATP = sn-glycerol 3-phosphate + ADP + H(+). The protein operates within polyol metabolism; glycerol degradation via glycerol kinase pathway; sn-glycerol 3-phosphate from glycerol: step 1/1. Inhibited by fructose 1,6-bisphosphate (FBP). Functionally, key enzyme in the regulation of glycerol uptake and metabolism. Catalyzes the phosphorylation of glycerol to yield sn-glycerol 3-phosphate. The polypeptide is Glycerol kinase (Bordetella parapertussis (strain 12822 / ATCC BAA-587 / NCTC 13253)).